The primary structure comprises 239 residues: Peptidyl-tRNA hydrolase (239 aa).

Tyr-14 lines the tRNA pocket. His-19 (proton acceptor) is an active-site residue. The tRNA site is built by Phe-64, Asn-66, and Asn-112.

The protein belongs to the PTH family. As to quaternary structure, monomer.

Its subcellular location is the cytoplasm. The catalysed reaction is an N-acyl-L-alpha-aminoacyl-tRNA + H2O = an N-acyl-L-amino acid + a tRNA + H(+). In terms of biological role, hydrolyzes ribosome-free peptidyl-tRNAs (with 1 or more amino acids incorporated), which drop off the ribosome during protein synthesis, or as a result of ribosome stalling. Its function is as follows. Catalyzes the release of premature peptidyl moieties from peptidyl-tRNA molecules trapped in stalled 50S ribosomal subunits, and thus maintains levels of free tRNAs and 50S ribosomes. The protein is Peptidyl-tRNA hydrolase of Rhizobium meliloti (strain 1021) (Ensifer meliloti).